The sequence spans 256 residues: Biosynthetic peptidoglycan transglycosylase (256 aa).

A helical membrane pass occupies residues 26-48 (VARWLAYAGGVFAGAWLATQLYY).

Belongs to the glycosyltransferase 51 family.

It localises to the cell inner membrane. The enzyme catalyses [GlcNAc-(1-&gt;4)-Mur2Ac(oyl-L-Ala-gamma-D-Glu-L-Lys-D-Ala-D-Ala)](n)-di-trans,octa-cis-undecaprenyl diphosphate + beta-D-GlcNAc-(1-&gt;4)-Mur2Ac(oyl-L-Ala-gamma-D-Glu-L-Lys-D-Ala-D-Ala)-di-trans,octa-cis-undecaprenyl diphosphate = [GlcNAc-(1-&gt;4)-Mur2Ac(oyl-L-Ala-gamma-D-Glu-L-Lys-D-Ala-D-Ala)](n+1)-di-trans,octa-cis-undecaprenyl diphosphate + di-trans,octa-cis-undecaprenyl diphosphate + H(+). It functions in the pathway cell wall biogenesis; peptidoglycan biosynthesis. In terms of biological role, peptidoglycan polymerase that catalyzes glycan chain elongation from lipid-linked precursors. The polypeptide is Biosynthetic peptidoglycan transglycosylase (Burkholderia thailandensis (strain ATCC 700388 / DSM 13276 / CCUG 48851 / CIP 106301 / E264)).